A 184-amino-acid polypeptide reads, in one-letter code: ATP synthase subunit b, chloroplastic (184 aa).

The helical transmembrane segment at Leu-27 to Leu-49 threads the bilayer.

This sequence belongs to the ATPase B chain family. F-type ATPases have 2 components, F(1) - the catalytic core - and F(0) - the membrane proton channel. F(1) has five subunits: alpha(3), beta(3), gamma(1), delta(1), epsilon(1). F(0) has four main subunits: a(1), b(1), b'(1) and c(10-14). The alpha and beta chains form an alternating ring which encloses part of the gamma chain. F(1) is attached to F(0) by a central stalk formed by the gamma and epsilon chains, while a peripheral stalk is formed by the delta, b and b' chains.

It is found in the plastid. Its subcellular location is the chloroplast thylakoid membrane. Its function is as follows. F(1)F(0) ATP synthase produces ATP from ADP in the presence of a proton or sodium gradient. F-type ATPases consist of two structural domains, F(1) containing the extramembraneous catalytic core and F(0) containing the membrane proton channel, linked together by a central stalk and a peripheral stalk. During catalysis, ATP synthesis in the catalytic domain of F(1) is coupled via a rotary mechanism of the central stalk subunits to proton translocation. Functionally, component of the F(0) channel, it forms part of the peripheral stalk, linking F(1) to F(0). This Olimarabidopsis pumila (Dwarf rocket) protein is ATP synthase subunit b, chloroplastic.